A 1420-amino-acid chain; its full sequence is DNA-directed RNA polymerase subunit beta'' (1420 aa).

Residues Cys-220, Cys-295, Cys-302, and Cys-305 each coordinate Zn(2+).

This sequence belongs to the RNA polymerase beta' chain family. RpoC2 subfamily. In plastids the minimal PEP RNA polymerase catalytic core is composed of four subunits: alpha, beta, beta', and beta''. When a (nuclear-encoded) sigma factor is associated with the core the holoenzyme is formed, which can initiate transcription. Requires Zn(2+) as cofactor.

It localises to the plastid. The protein resides in the chloroplast. The catalysed reaction is RNA(n) + a ribonucleoside 5'-triphosphate = RNA(n+1) + diphosphate. Functionally, DNA-dependent RNA polymerase catalyzes the transcription of DNA into RNA using the four ribonucleoside triphosphates as substrates. The chain is DNA-directed RNA polymerase subunit beta'' from Adiantum capillus-veneris (Maidenhair fern).